Consider the following 126-residue polypeptide: Glycine cleavage system H protein (126 aa).

The region spanning 22–104 is the Lipoyl-binding domain; it reads IAYVGITDYA…YGEGWLIKMK (83 aa). Lysine 63 carries the N6-lipoyllysine modification.

It belongs to the GcvH family. As to quaternary structure, the glycine cleavage system is composed of four proteins: P, T, L and H. It depends on (R)-lipoate as a cofactor.

Functionally, the glycine cleavage system catalyzes the degradation of glycine. The H protein shuttles the methylamine group of glycine from the P protein to the T protein. This is Glycine cleavage system H protein from Bacteroides thetaiotaomicron (strain ATCC 29148 / DSM 2079 / JCM 5827 / CCUG 10774 / NCTC 10582 / VPI-5482 / E50).